A 158-amino-acid polypeptide reads, in one-letter code: Transcriptional repressor NrdR (158 aa).

A zinc finger spans residues 3-34; sequence CPYCGYPDSKVIDSRPTDDNTSIRRRRECLKC. The region spanning 49–139 is the ATP-cone domain; sequence ILVIKKDNRR…VYRQFKDINT (91 aa).

It belongs to the NrdR family. Zn(2+) serves as cofactor.

In terms of biological role, negatively regulates transcription of bacterial ribonucleotide reductase nrd genes and operons by binding to NrdR-boxes. This is Transcriptional repressor NrdR from Thermoanaerobacter sp. (strain X514).